The primary structure comprises 1286 residues: CLIP-associating protein 2 (1286 aa).

Residues 1-40 are golgi localization; that stretch reads MRRLICKRICDYKSFDDEESVDGNRPSSAASAFKVPAPKT. Phosphoserine is present on residues S14 and S20. Residues 17–67 form a disordered region; sequence DEESVDGNRPSSAASAFKVPAPKTPGNPVSSARKPGSAGGPKVGGPSKEGG. The span at 53-67 shows a compositional bias: gly residues; that stretch reads SAGGPKVGGPSKEGG. Residues 66-317 form a TOG 1 region; sequence GGAGAVDEDD…KSLQTYLKSS (252 aa). 3 HEAT repeats span residues 179 to 214, 215 to 251, and 256 to 293; these read HGAEAIVPTLFNLVPNSAKVMATSGCAAIRFIIRHT, HVPRLIPLITSNCTSKSVPVRRRSFEFLDLLLQEWQT, and RHAAVLVETIKKGIHDADAEARVEARKTYMGLRNHFPG. The segment at 320 to 374 is disordered; sequence VASLPQSDRSSSSSQESLNRPFSSKWSTANPSTVAGRVSVGGSKANPLPGSLQRS. Phosphoserine is present on residues S322, S333, and S336. The span at 322–340 shows a compositional bias: low complexity; it reads SLPQSDRSSSSSQESLNRP. Polar residues predominate over residues 341 to 352; the sequence is FSSKWSTANPST. S374, S376, and S413 each carry phosphoserine. The disordered stretch occupies residues 411–473; that stretch reads YASLEDTSDK…GSRSGSPGRV (63 aa). The span at 417 to 431 shows a compositional bias: basic and acidic residues; that stretch reads TSDKMDGTASDDGRV. The interval 450-565 is interaction with microtubules, MAPRE1 and MAPRE3; that stretch reads RGRSRTKMVS…GPGYGISQSS (116 aa). Residues 459-473 show a composition bias toward low complexity; that stretch reads SQSQPGSRSGSPGRV. Residues S461, S465, S469, S484, and S495 each carry the phosphoserine modification. The disordered stretch occupies residues 493–564; sequence SASAQKRSKI…LGPGYGISQS (72 aa). Residues 500–503 carry the SXIP motif 1; mediates interaction with MAPRE1 and targeting to microtubule plus ends motif; that stretch reads SKIP. Residue S513 is modified to Phosphoserine. The SXIP motif 2; mediates interaction with MAPRE1 and targeting to microtubule plus ends motif lies at 523–526; the sequence is SRIP. S531, S535, S570, S572, S581, S614, and S620 each carry phosphoserine. Residues 605–616 are compositionally biased toward basic and acidic residues; the sequence is RRYESYGMHSDD. The segment at 605 to 638 is disordered; the sequence is RRYESYGMHSDDDANSDASSACSERSYSSRNGSI. Residues 620 to 634 are compositionally biased toward low complexity; the sequence is SDASSACSERSYSSR. A TOG 2 region spans residues 642–873; sequence MRQTEDVAEV…TKLLHNHLRN (232 aa). HEAT repeat units follow at residues 702 to 739 and 764 to 801; these read KVFSMFLETLVDFIQVHKDDLQDWLFVLLTQLLKKMGA and LQFNILMRFTVDQTQTPSLKVKVAILKYIETLAKQMDP. T779 is modified (phosphothreonine). The interval 864–1286 is interaction with RSN and localization to the Golgi and kinetochores; sequence TKLLHNHLRN…DPTADVSGQS (423 aa). Disordered stretches follow at residues 870–920 and 944–989; these read HLRN…FDYD and SFRS…SQPA. 2 stretches are compositionally biased toward polar residues: residues 872–884 and 893–914; these read RNTGNGTQSSMGS and SPANWSSPLTSPTNTSQNTLSP. Residue S884 is modified to Phosphoserine. A phosphoserine mark is found at S944, S947, S1005, and S1021. Over residues 947-964 the composition is skewed to basic and acidic residues; it reads SQEDMSEPVRRDPKKEDG. A required for cortical localization region spans residues 1009 to 1286; that stretch reads RDYNPYNYSD…DPTADVSGQS (278 aa). 3 HEAT repeats span residues 1046 to 1083, 1090 to 1127, and 1208 to 1245; these read LDHSDLVAELLKELSNHNERIEERKIALYELMKLTQEE, EHFKTILLLLLETLGDKEPTIRALALKVLKEILRHQPA, and MLLPEIMPGLIQGYDNSESSVRKACVFCLVAVHAVIGD.

This sequence belongs to the CLASP family. In terms of assembly, interacts with microtubules. Interacts with MAPRE1; probably required for targeting to growing microtubule plus ends. Interacts with ERC1, MAPRE3 and PHLDB2. The interaction with ERC1 may be mediated by PHLDB2. Interacts with GCC2; recruits CLASP2 to Golgi membranes. Interacts with CLIP2 and RSN. Interacts with MACF1. Interacts with mtcl2. Interacts with MTCL1. Post-translationally, phosphorylated by GSK3B. Phosphorylation by GSK3B may negatively regulate binding to microtubule lattices in lamella. Isoform 2 is phosphorylated on Ser-241. As to expression, highly expressed in brain and at low levels in heart, kidney and lung.

Its subcellular location is the cytoplasm. The protein resides in the cytoskeleton. It is found in the microtubule organizing center. It localises to the centrosome. The protein localises to the chromosome. Its subcellular location is the centromere. The protein resides in the kinetochore. It is found in the spindle. It localises to the spindle pole. The protein localises to the golgi apparatus. Its subcellular location is the trans-Golgi network. The protein resides in the cell membrane. It is found in the cell projection. It localises to the ruffle membrane. The protein localises to the cell cortex. Functionally, microtubule plus-end tracking protein that promotes the stabilization of dynamic microtubules. Involved in the nucleation of noncentrosomal microtubules originating from the trans-Golgi network (TGN). Required for the polarization of the cytoplasmic microtubule arrays in migrating cells towards the leading edge of the cell. May act at the cell cortex to enhance the frequency of rescue of depolymerizing microtubules by attaching their plus-ends to cortical platforms composed of ERC1 and PHLDB2. This cortical microtubule stabilizing activity is regulated at least in part by phosphatidylinositol 3-kinase signaling. Also performs a similar stabilizing function at the kinetochore which is essential for the bipolar alignment of chromosomes on the mitotic spindle. Acts as a mediator of ERBB2-dependent stabilization of microtubules at the cell cortex. The sequence is that of CLIP-associating protein 2 (Clasp2) from Mus musculus (Mouse).